Here is a 221-residue protein sequence, read N- to C-terminus: Probable GTP-binding protein EngB (221 aa).

The EngB-type G domain maps to 37–219 (QGIEIALAGR…RAAIVKLLRE (183 aa)). Residues 45-52 (GRSNVGKS), 72-76 (GRTQE), 97-100 (DMPG), 164-167 (TKTD), and 198-200 (TSS) contribute to the GTP site. 2 residues coordinate Mg(2+): serine 52 and threonine 74.

This sequence belongs to the TRAFAC class TrmE-Era-EngA-EngB-Septin-like GTPase superfamily. EngB GTPase family. Mg(2+) is required as a cofactor.

Functionally, necessary for normal cell division and for the maintenance of normal septation. The protein is Probable GTP-binding protein EngB of Afipia carboxidovorans (strain ATCC 49405 / DSM 1227 / KCTC 32145 / OM5) (Oligotropha carboxidovorans).